The chain runs to 192 residues: Large ribosomal subunit protein uL24c (192 aa).

A chloroplast-targeting transit peptide spans 1 to 47 (MAAMAALQSSFTSLSLSSNSFLGQRLFPSPTTLQVKTEGHSPCLIVM).

Component of the chloroplast large ribosomal subunit (LSU). Mature 70S chloroplast ribosomes of higher plants consist of a small (30S) and a large (50S) subunit. The 30S small subunit contains 1 molecule of ribosomal RNA (16S rRNA) and 24 different proteins. The 50S large subunit contains 3 rRNA molecules (23S, 5S and 4.5S rRNA) and 33 different proteins.

It is found in the plastid. It localises to the chloroplast. In terms of biological role, component of the chloroplast ribosome (chloro-ribosome), a dedicated translation machinery responsible for the synthesis of chloroplast genome-encoded proteins, including proteins of the transcription and translation machinery and components of the photosynthetic apparatus. The protein is Large ribosomal subunit protein uL24c (RPL24) of Spinacia oleracea (Spinach).